We begin with the raw amino-acid sequence, 953 residues long: Isoleucine--tRNA ligase (953 aa).

Residues 58 to 68 carry the 'HIGH' region motif; it reads PYANGSIHIGH. E577 is an L-isoleucyl-5'-AMP binding site. A 'KMSKS' region motif is present at residues 618–622; it reads KMSKS. K621 lines the ATP pocket. Positions 916, 919, 936, and 939 each coordinate Zn(2+).

It belongs to the class-I aminoacyl-tRNA synthetase family. IleS type 1 subfamily. As to quaternary structure, monomer. It depends on Zn(2+) as a cofactor.

The protein resides in the cytoplasm. It carries out the reaction tRNA(Ile) + L-isoleucine + ATP = L-isoleucyl-tRNA(Ile) + AMP + diphosphate. Catalyzes the attachment of isoleucine to tRNA(Ile). As IleRS can inadvertently accommodate and process structurally similar amino acids such as valine, to avoid such errors it has two additional distinct tRNA(Ile)-dependent editing activities. One activity is designated as 'pretransfer' editing and involves the hydrolysis of activated Val-AMP. The other activity is designated 'posttransfer' editing and involves deacylation of mischarged Val-tRNA(Ile). This Aeromonas hydrophila subsp. hydrophila (strain ATCC 7966 / DSM 30187 / BCRC 13018 / CCUG 14551 / JCM 1027 / KCTC 2358 / NCIMB 9240 / NCTC 8049) protein is Isoleucine--tRNA ligase.